A 563-amino-acid polypeptide reads, in one-letter code: MIRFEDVSVTYDGATEPTVRAVDFEVPEGELVLLAGPSGVGKSTVLGAVGGLVPHFTGGTLRGRVTVAGRDTRTHKPRELADVVGTVGQDPLSHFVTDTVEDELAYGMESLGLPPDVMRRRVEETLDLLGLSDLRSRPIATLSGGQQQRVAIGSVLTPHPDVLVLDEPTSALDPAAAEEVLAVLQRLVHDLGTTVLMAEHRLERVIQYADQVVLLPAPGEAPLIGAPAEVMAVSPVYPPVVGLGRLAGWSPLPLTIRNARRRAAPLRERLAGREIPDHTPPPSAPLPAPPAPRPVTSRWRRRGKRPENPSAPTPYAAEVRSLAVRRDRVQALRHVDLTVSPGETVALMGRNGAGKSTLLSALVGLVEPSAGSVRAGDAVPHRTAPRDLVRRVGLVPQEPRDLLYADTVAAECAAADRDADAAPGTCRALLSELLPGITDDIHPRDLSEGQRLTLALSVVLTARPPLLLLDEPTRGLDYAAKARLAGILRGLAAEGHAIVLATHDVELAAELAHRVVLLAEGEVIADGPAADVVVASPSYAPQVAKVLAPRKWLTVAQVREALT.

Positions 2 to 243 (IRFEDVSVTY…SPVYPPVVGL (242 aa)) constitute an ABC transporter 1 domain. ATP is bound at residue 36–43 (GPSGVGKS). Positions 271-317 (AGREIPDHTPPPSAPLPAPPAPRPVTSRWRRRGKRPENPSAPTPYAA) are disordered. Pro residues predominate over residues 278 to 293 (HTPPPSAPLPAPPAPR). In terms of domain architecture, ABC transporter 2 spans 317-545 (AEVRSLAVRR…SPSYAPQVAK (229 aa)). 349–356 (GRNGAGKS) lines the ATP pocket.

Belongs to the ABC transporter superfamily.

It is found in the cell membrane. Its function is as follows. Probably part of an ABC transporter complex. Responsible for energy coupling to the transport system. The sequence is that of Putative ABC transporter ATP-binding protein SCO2324 from Streptomyces coelicolor (strain ATCC BAA-471 / A3(2) / M145).